Here is a 369-residue protein sequence, read N- to C-terminus: IST1-like protein (369 aa).

Positions 12–59 (KLKVQLKLAVSRIQILKNKKANIVRDEKRNVAELLRKKNEESARIRVE) form a coiled coil. The tract at residues 224 to 354 (QIIQQQQQPQ…SSDTGYPDYD (131 aa)) is disordered. Low complexity-rich tracts occupy residues 225–239 (IIQQ…SFPI) and 246–270 (PTFS…SPQF). Polar residues predominate over residues 277-305 (FYNNNSGNQTPQFPTISTNNSDGYSNDKF). Positions 306-337 (NNGNNNYNNNNNNNNNNNNNNNHNNNNNNNNN) are enriched in low complexity.

It belongs to the IST1 family.

This Dictyostelium discoideum (Social amoeba) protein is IST1-like protein.